The chain runs to 265 residues: 3-methyl-2-oxobutanoate hydroxymethyltransferase (265 aa).

Mg(2+)-binding residues include D45 and D84. 3-methyl-2-oxobutanoate-binding positions include 45–46 (DS), D84, and K112. Residue E114 participates in Mg(2+) binding. The active-site Proton acceptor is the E181.

It belongs to the PanB family. Homodecamer; pentamer of dimers. The cofactor is Mg(2+).

It localises to the cytoplasm. The catalysed reaction is 3-methyl-2-oxobutanoate + (6R)-5,10-methylene-5,6,7,8-tetrahydrofolate + H2O = 2-dehydropantoate + (6S)-5,6,7,8-tetrahydrofolate. It participates in cofactor biosynthesis; (R)-pantothenate biosynthesis; (R)-pantoate from 3-methyl-2-oxobutanoate: step 1/2. In terms of biological role, catalyzes the reversible reaction in which hydroxymethyl group from 5,10-methylenetetrahydrofolate is transferred onto alpha-ketoisovalerate to form ketopantoate. The protein is 3-methyl-2-oxobutanoate hydroxymethyltransferase of Pectobacterium carotovorum subsp. carotovorum (strain PC1).